We begin with the raw amino-acid sequence, 757 residues long: LPS-assembly protein LptD (757 aa).

Residues 1 to 20 (MLQRFITSLMLLPFPGSALA) form the signal peptide.

The protein belongs to the LptD family. In terms of assembly, component of the lipopolysaccharide transport and assembly complex. Interacts with LptE and LptA.

It localises to the cell outer membrane. Functionally, together with LptE, is involved in the assembly of lipopolysaccharide (LPS) at the surface of the outer membrane. This chain is LPS-assembly protein LptD, found in Idiomarina loihiensis (strain ATCC BAA-735 / DSM 15497 / L2-TR).